The primary structure comprises 150 residues: Protein NrdI (150 aa).

This sequence belongs to the NrdI family.

Its function is as follows. Probably involved in ribonucleotide reductase function. In Mycobacterium avium (strain 104), this protein is Protein NrdI.